Here is a 316-residue protein sequence, read N- to C-terminus: Pantothenate kinase (316 aa).

Position 95–102 (95–102) interacts with ATP; that stretch reads GSVAVGKS.

The protein belongs to the prokaryotic pantothenate kinase family.

It is found in the cytoplasm. The enzyme catalyses (R)-pantothenate + ATP = (R)-4'-phosphopantothenate + ADP + H(+). It participates in cofactor biosynthesis; coenzyme A biosynthesis; CoA from (R)-pantothenate: step 1/5. This chain is Pantothenate kinase, found in Yersinia pseudotuberculosis serotype O:3 (strain YPIII).